Consider the following 176-residue polypeptide: NADH-quinone oxidoreductase subunit B 1 (176 aa).

Cys55, Cys56, Cys120, and Cys150 together coordinate [4Fe-4S] cluster.

Belongs to the complex I 20 kDa subunit family. As to quaternary structure, NDH-1 is composed of 14 different subunits. Subunits NuoB, C, D, E, F, and G constitute the peripheral sector of the complex. [4Fe-4S] cluster is required as a cofactor.

The protein localises to the cell inner membrane. It catalyses the reaction a quinone + NADH + 5 H(+)(in) = a quinol + NAD(+) + 4 H(+)(out). Its function is as follows. NDH-1 shuttles electrons from NADH, via FMN and iron-sulfur (Fe-S) centers, to quinones in the respiratory chain. Couples the redox reaction to proton translocation (for every two electrons transferred, four hydrogen ions are translocated across the cytoplasmic membrane), and thus conserves the redox energy in a proton gradient. The chain is NADH-quinone oxidoreductase subunit B 1 from Cereibacter sphaeroides (strain ATCC 17029 / ATH 2.4.9) (Rhodobacter sphaeroides).